A 351-amino-acid chain; its full sequence is Porphobilinogen deaminase (351 aa).

C242 is modified (S-(dipyrrolylmethanemethyl)cysteine).

This sequence belongs to the HMBS family. Monomer. Requires dipyrromethane as cofactor.

The enzyme catalyses 4 porphobilinogen + H2O = hydroxymethylbilane + 4 NH4(+). Its pathway is porphyrin-containing compound metabolism; protoporphyrin-IX biosynthesis; coproporphyrinogen-III from 5-aminolevulinate: step 2/4. Tetrapolymerization of the monopyrrole PBG into the hydroxymethylbilane pre-uroporphyrinogen in several discrete steps. This chain is Porphobilinogen deaminase, found in Rickettsia peacockii (strain Rustic).